The chain runs to 452 residues: Mitochondrial import inner membrane translocase subunit TIM44 (452 aa).

T128 carries the phosphothreonine modification. Residue 166–173 coordinates ATP; the sequence is SGEKLGKT. The residue at position 177 (K177) is an N6-succinyllysine. S180 carries the post-translational modification Phosphoserine. K217 is subject to N6-succinyllysine.

The protein belongs to the Tim44 family. In terms of assembly, probable component of the PAM complex at least composed of a mitochondrial HSP70 protein, GRPEL1 or GRPEL2, TIMM44, TIMM16/PAM16 and TIMM14/DNAJC19. The complex interacts with the TIMM23 component of the TIM23 complex. Interacts with SLC25A4/ANT1 and SLC25A5/ANT2; leading to inhibit the presequence translocase TIMM23, thereby promoting stabilization of PINK1.

Its subcellular location is the mitochondrion inner membrane. Functionally, essential component of the PAM complex, a complex required for the translocation of transit peptide-containing proteins from the inner membrane into the mitochondrial matrix in an ATP-dependent manner. Recruits mitochondrial HSP70 to drive protein translocation into the matrix using ATP as an energy source. The chain is Mitochondrial import inner membrane translocase subunit TIM44 (Timm44) from Mus musculus (Mouse).